Reading from the N-terminus, the 180-residue chain is Large ribosomal subunit protein uL5c (180 aa).

Belongs to the universal ribosomal protein uL5 family. As to quaternary structure, part of the 50S ribosomal subunit; contacts the 5S rRNA.

Its subcellular location is the plastid. It localises to the chloroplast. In terms of biological role, binds 5S rRNA, forms part of the central protuberance of the 50S subunit. The protein is Large ribosomal subunit protein uL5c (rpl5) of Oedogonium cardiacum (Filamentous green alga).